The primary structure comprises 426 residues: Histidine--tRNA ligase (426 aa).

It belongs to the class-II aminoacyl-tRNA synthetase family.

It localises to the cytoplasm. The catalysed reaction is tRNA(His) + L-histidine + ATP = L-histidyl-tRNA(His) + AMP + diphosphate + H(+). The chain is Histidine--tRNA ligase from Saccharolobus solfataricus (strain ATCC 35092 / DSM 1617 / JCM 11322 / P2) (Sulfolobus solfataricus).